The following is a 29-amino-acid chain: Small toxic protein ZorP (29 aa).

A helical transmembrane segment spans residues 10–27; that stretch reads VLIAVLELLVALLRLIDL.

The protein localises to the membrane. Toxic component of a type I toxin-antitoxin (TA) system. Overexpression leads to cell stasis and a decrease in colony-forming units. Probably repressed by cognate small RNA orzP. Base pairing occurs between 18 bases in the 5' UTR of zorP mRNA and the 5' end of OrzP sRNA. The chain is Small toxic protein ZorP from Escherichia coli O157:H7.